The primary structure comprises 526 residues: Tyrosine-protein kinase transforming protein Src (526 aa).

Positions 1 to 52 (MGSSKSKPKDPSQRRRSLEPPDSTHHGGFPASQTPDETAAPDAHRNPSRSFG) are disordered. Gly2 carries the N-myristoyl glycine; by host lipid modification. The span at 7–25 (KPKDPSQRRRSLEPPDSTH) shows a compositional bias: basic and acidic residues. The 62-residue stretch at 81 to 142 (GGVTTFVALY…PSNYVAPSDS (62 aa)) folds into the SH3 domain. Positions 148–245 (WYFGKITRRE…GLCHRLTNVC (98 aa)) constitute an SH2 domain. A Protein kinase domain is found at 267 to 517 (LRLEAKLGQG…TFKYLQAQLL (251 aa)). Residues 273–281 (LGQGCFGEV) and Lys295 contribute to the ATP site. Catalysis depends on Asp386, which acts as the Proton acceptor. Phosphotyrosine; by autocatalysis is present on Tyr416.

The protein belongs to the protein kinase superfamily. Tyr protein kinase family. SRC subfamily. The cofactor is Mn(2+). The phosphorylated form is termed pp60v-src.

The catalysed reaction is L-tyrosyl-[protein] + ATP = O-phospho-L-tyrosyl-[protein] + ADP + H(+). Functionally, this phosphoprotein, required for both the initiation and the maintenance of neoplastic transformation, is a protein kinase that catalyzes the phosphorylation of tyrosine residues in vitro. This Gallus gallus (Chicken) protein is Tyrosine-protein kinase transforming protein Src (V-SRC).